The sequence spans 333 residues: MSNIDLIIKKEISLDELREKIIKGYDITKEEAMQLVEAPLEDLCSVANEIRKYFCSNTFDMCSIINAKSGKCSENCKFCAQSSHYDTKCDEYDILDKEKILEQGKSDFNKGVLRYSIVTSGRALYGKEIDEVYDAIETLNKETDGYICASLGLLDEEGFNKMKNAGLKRVHNNLEASRNFFSKVCTTHTYDDKINAIKAAQKAGMVVCSGGIMGMGETWEDRIDMAIELRELGIMSIPVNMLNPIASTPFENIEPLTEDDMRRIVAIYRFINPRAFIRLAGGRGLMKDKGKSCFLSGANAAITGDMLTTAGISIETDKKMVEELGYKIELKED.

The Radical SAM core domain maps to 54-283 (FCSNTFDMCS…RAFIRLAGGR (230 aa)). The [4Fe-4S] cluster site is built by Cys72, Cys76, and Cys79. [2Fe-2S] cluster contacts are provided by Ser116, Cys148, Cys208, and Arg278.

Belongs to the radical SAM superfamily. Biotin synthase family. In terms of assembly, homodimer. Requires [4Fe-4S] cluster as cofactor. It depends on [2Fe-2S] cluster as a cofactor.

It catalyses the reaction (4R,5S)-dethiobiotin + (sulfur carrier)-SH + 2 reduced [2Fe-2S]-[ferredoxin] + 2 S-adenosyl-L-methionine = (sulfur carrier)-H + biotin + 2 5'-deoxyadenosine + 2 L-methionine + 2 oxidized [2Fe-2S]-[ferredoxin]. Its pathway is cofactor biosynthesis; biotin biosynthesis; biotin from 7,8-diaminononanoate: step 2/2. Catalyzes the conversion of dethiobiotin (DTB) to biotin by the insertion of a sulfur atom into dethiobiotin via a radical-based mechanism. This Brachyspira hyodysenteriae (strain ATCC 49526 / WA1) protein is Biotin synthase.